The chain runs to 263 residues: Mannose-specific lectin 2 (263 aa).

The signal sequence occupies residues 1 to 24 (MAKSLVLSSLLLALLLAAPLASLA). 2 Bulb-type lectin domains span residues 26–136 (NNVL…APNR) and 150–260 (RNVL…SSAS). Disulfide bonds link Cys-54-Cys-76 and Cys-178-Cys-203.

Heterotetramer of 2 domain 1 and 2 domain 2 chains arranged as a dimer of domain 1/domain 2 heterodimers.

Its function is as follows. Mannose-specific lectin. Has weak agglutinating activity towards trypsin-treated erythrocytes from rabbit but not from human. The chain is Mannose-specific lectin 2 from Crocus vernus (Dutch crocus).